Consider the following 344-residue polypeptide: Alkyl hydroperoxide reductase Rv2159c (344 aa).

The interval 49–50 is important for interaction with PknI; it reads AG. C84 acts as the Cysteine sulfenic acid (-SOH) intermediate in catalysis.

It belongs to the AhpD family. In terms of assembly, interacts with the serine/threonine-protein kinase PknI. The PknI-Rv2159c interaction is mediated through phosphorylation independent physical interaction.

Its activity is regulated as follows. Interaction with PknI increases the peroxidase activity by several folds. Involved in protection against oxidative stresses. May play a significant role in maintaining the cellular homeostasis during stress and virulence of M.tuberculosis. In vitro, catalyzes the decomposition of cumene hydroperoxide (CHP) to acetophenone. In Mycobacterium tuberculosis (strain ATCC 25618 / H37Rv), this protein is Alkyl hydroperoxide reductase Rv2159c.